The primary structure comprises 509 residues: H/ACA ribonucleoprotein complex subunit DKC1 (509 aa).

A disordered region spans residues 1-25 (MADAEAAMTFPKKHKKKKERKPLPE). The residue at position 2 (alanine 2) is an N-acetylalanine. A nucleolar localization region spans residues 2–22 (ADAEAAMTFPKKHKKKKERKP). Positions 11 to 20 (PKKHKKKKER) are enriched in basic residues. Glycyl lysine isopeptide (Lys-Gly) (interchain with G-Cter in SUMO2) cross-links involve residues lysine 21, lysine 40, and lysine 44. Residue aspartate 126 is the Nucleophile of the active site. A Glycyl lysine isopeptide (Lys-Gly) (interchain with G-Cter in SUMO2) cross-link involves residue lysine 192. Positions 297 to 372 (HKRLVMKDSA…VVAKIKRVIM (76 aa)) constitute a PUA domain. The tract at residues 381-509 (WGLGPKASQK…KARAAEELSG (129 aa)) is disordered. Serine 388 carries the phosphoserine modification. Residues lysine 395 and lysine 425 each participate in a glycyl lysine isopeptide (Lys-Gly) (interchain with G-Cter in SUMO2) cross-link. The segment covering 416 to 425 (DYVDYSDSSK) has biased composition (basic and acidic residues). A nuclear and nucleolar localization region spans residues 447-509 (KRKRDSDSDA…KARAAEELSG (63 aa)). Phosphoserine is present on residues serine 452 and serine 454. A Phosphothreonine modification is found at threonine 460. Residues 466 to 475 (RVKKEKKKKK) show a composition bias toward basic residues. A compositionally biased stretch (acidic residues) spans 481–490 (GEEAAEDGDG). Residue serine 508 is modified to Phosphoserine.

Belongs to the pseudouridine synthase TruB family. Part of the H/ACA small nucleolar ribonucleoprotein (H/ACA snoRNP) complex, which contains NHP2/NOLA2, GAR1/NOLA1, NOP10/NOLA3, and DKC1/NOLA4, which is presumed to be the catalytic subunit. The complex contains a stable core formed by binding of one or two NOP10-DKC1 heterodimers to NHP2; GAR1 subsequently binds to this core via DKC1. The complex binds a box H/ACA small nucleolar RNA (snoRNA), which may target the specific site of modification within the RNA substrate. During assembly, the complex contains NAF1 instead of GAR1/NOLA1. The complex also interacts with TERC, which contains a 3'-terminal domain related to the box H/ACA snoRNAs. Specific interactions with snoRNAs or TERC are mediated by GAR1 and NHP2. Associates with NOLC1/NOPP140. H/ACA snoRNPs interact with the SMN complex, consisting of SMN1 or SMN2, GEMIN2/SIP1, DDX20/GEMIN3, and GEMIN4. This is mediated by interaction between GAR1 and SMN1 or SMN2. The SMN complex may be required for correct assembly of the H/ACA snoRNP complex. Component of the telomerase holoenzyme complex composed of one molecule of TERT, one molecule of WRAP53/TCAB1, two molecules of H/ACA ribonucleoprotein complex subunits DKC1, NOP10, NHP2 and GAR1, and a telomerase RNA template component (TERC). The telomerase holoenzyme complex is associated with TEP1, SMG6/EST1A and POT1. Interacts with SHQ1; this interaction may lead to the stabilization of DKC1, from the time of its synthesis until its association with NOP10, NHP2, and NAF1 at the nascent H/ACA RNA. Interacts with HMBOX1. Interacts with DHX36.

The protein localises to the nucleus. The protein resides in the nucleolus. It is found in the cajal body. The enzyme catalyses uridine in 5S rRNA = pseudouridine in 5S rRNA. Catalytic subunit of H/ACA small nucleolar ribonucleoprotein (H/ACA snoRNP) complex, which catalyzes pseudouridylation of rRNA. This involves the isomerization of uridine such that the ribose is subsequently attached to C5, instead of the normal N1. Each rRNA can contain up to 100 pseudouridine ('psi') residues, which may serve to stabilize the conformation of rRNAs. Required for ribosome biogenesis and telomere maintenance. Also required for correct processing or intranuclear trafficking of TERC, the RNA component of the telomerase reverse transcriptase (TERT) holoenzyme. The sequence is that of H/ACA ribonucleoprotein complex subunit DKC1 (Dkc1) from Rattus norvegicus (Rat).